The following is a 741-amino-acid chain: Phosphoribosylformylglycinamidine synthase subunit PurL (741 aa).

His-53 is an active-site residue. Residues Tyr-56 and Lys-95 each coordinate ATP. A Mg(2+)-binding site is contributed by Glu-97. Substrate-binding positions include 98–101 (SHNH) and Arg-120. His-99 (proton acceptor) is an active-site residue. Residue Asp-121 participates in Mg(2+) binding. Gln-244 serves as a coordination point for substrate. Asp-274 provides a ligand contact to Mg(2+). 318–320 (ESQ) contacts substrate. ATP contacts are provided by Asp-501 and Gly-538. A Mg(2+)-binding site is contributed by Asn-539. Ser-541 is a binding site for substrate.

Belongs to the FGAMS family. As to quaternary structure, monomer. Part of the FGAM synthase complex composed of 1 PurL, 1 PurQ and 2 PurS subunits.

The protein localises to the cytoplasm. The enzyme catalyses N(2)-formyl-N(1)-(5-phospho-beta-D-ribosyl)glycinamide + L-glutamine + ATP + H2O = 2-formamido-N(1)-(5-O-phospho-beta-D-ribosyl)acetamidine + L-glutamate + ADP + phosphate + H(+). The protein operates within purine metabolism; IMP biosynthesis via de novo pathway; 5-amino-1-(5-phospho-D-ribosyl)imidazole from N(2)-formyl-N(1)-(5-phospho-D-ribosyl)glycinamide: step 1/2. In terms of biological role, part of the phosphoribosylformylglycinamidine synthase complex involved in the purines biosynthetic pathway. Catalyzes the ATP-dependent conversion of formylglycinamide ribonucleotide (FGAR) and glutamine to yield formylglycinamidine ribonucleotide (FGAM) and glutamate. The FGAM synthase complex is composed of three subunits. PurQ produces an ammonia molecule by converting glutamine to glutamate. PurL transfers the ammonia molecule to FGAR to form FGAM in an ATP-dependent manner. PurS interacts with PurQ and PurL and is thought to assist in the transfer of the ammonia molecule from PurQ to PurL. In Latilactobacillus sakei subsp. sakei (strain 23K) (Lactobacillus sakei subsp. sakei), this protein is Phosphoribosylformylglycinamidine synthase subunit PurL.